The chain runs to 554 residues: Glutamine--tRNA ligase (554 aa).

The 'HIGH' region motif lies at 34–44 (PEPNGYLHIGH). ATP-binding positions include 35-37 (EPN) and 41-47 (HIGHAKS). Positions 67 and 212 each coordinate L-glutamine. ATP-binding positions include T231, 261-262 (RL), and 269-271 (MSK). A 'KMSKS' region motif is present at residues 268 to 272 (VMSKR). Positions 317–324 (TKQDNTIE) are interaction with tRNA.

This sequence belongs to the class-I aminoacyl-tRNA synthetase family. As to quaternary structure, monomer.

The protein localises to the cytoplasm. The catalysed reaction is tRNA(Gln) + L-glutamine + ATP = L-glutaminyl-tRNA(Gln) + AMP + diphosphate. The protein is Glutamine--tRNA ligase of Escherichia coli O127:H6 (strain E2348/69 / EPEC).